Reading from the N-terminus, the 314-residue chain is Mitochondrial thiamine pyrophosphate carrier 1 (314 aa).

The next 6 helical transmembrane spans lie at 14–30, 84–100, 116–136, 170–186, 217–233, and 285–302; these read VAAW…GLLA, LLYV…YSLF, LVVG…FDVL, GSIA…SIMF, SAGT…TFPL, and GILV…VSFW. Solcar repeat units follow at residues 14 to 103, 110 to 195, and 210 to 310; these read VAAW…FNRY, EARL…IRIY, and ELAT…AIHY.

This sequence belongs to the mitochondrial carrier (TC 2.A.29) family.

It is found in the mitochondrion inner membrane. In terms of biological role, mitochondrial transporter that mediates uptake of thiamine pyrophosphate (ThPP) into mitochondria. This is Mitochondrial thiamine pyrophosphate carrier 1 (TPC1) from Saccharomyces cerevisiae (strain YJM789) (Baker's yeast).